Here is a 284-residue protein sequence, read N- to C-terminus: Nucleotide-binding protein NMB0738 (284 aa).

8–15 (GLSGSGKS) provides a ligand contact to ATP. 58–61 (DVRS) contributes to the GTP binding site.

It belongs to the RapZ-like family.

In terms of biological role, displays ATPase and GTPase activities. This is Nucleotide-binding protein NMB0738 from Neisseria meningitidis serogroup B (strain ATCC BAA-335 / MC58).